The sequence spans 320 residues: 4-diphosphocytidyl-2-C-methyl-D-erythritol kinase (320 aa).

The active site involves Lys-20. 112–122 provides a ligand contact to ATP; it reads PVAGGMGGGSA. Residue Asp-154 is part of the active site.

Belongs to the GHMP kinase family. IspE subfamily.

It catalyses the reaction 4-CDP-2-C-methyl-D-erythritol + ATP = 4-CDP-2-C-methyl-D-erythritol 2-phosphate + ADP + H(+). The protein operates within isoprenoid biosynthesis; isopentenyl diphosphate biosynthesis via DXP pathway; isopentenyl diphosphate from 1-deoxy-D-xylulose 5-phosphate: step 3/6. Its function is as follows. Catalyzes the phosphorylation of the position 2 hydroxy group of 4-diphosphocytidyl-2C-methyl-D-erythritol. This is 4-diphosphocytidyl-2-C-methyl-D-erythritol kinase from Arthrobacter sp. (strain FB24).